The primary structure comprises 478 residues: Ribosomal RNA small subunit methyltransferase F (478 aa).

Residues 121 to 127, Glu145, Asp172, and Asp190 each bind S-adenosyl-L-methionine; that span reads ASAPGSK. Catalysis depends on Cys243, which acts as the Nucleophile.

Belongs to the class I-like SAM-binding methyltransferase superfamily. RsmB/NOP family.

Its subcellular location is the cytoplasm. The catalysed reaction is cytidine(1407) in 16S rRNA + S-adenosyl-L-methionine = 5-methylcytidine(1407) in 16S rRNA + S-adenosyl-L-homocysteine + H(+). In terms of biological role, specifically methylates the cytosine at position 1407 (m5C1407) of 16S rRNA. In Shewanella woodyi (strain ATCC 51908 / MS32), this protein is Ribosomal RNA small subunit methyltransferase F.